The following is a 609-amino-acid chain: Glutamine--fructose-6-phosphate aminotransferase [isomerizing] (609 aa).

Cys-2 serves as the catalytic Nucleophile; for GATase activity. Residues 2-219 (CGIFGYLGSK…SGELAIVGLG (218 aa)) enclose the Glutamine amidotransferase type-2 domain. 2 SIS domains span residues 280 to 426 (ISEK…SKHT) and 458 to 599 (WAHT…IDCP). Lys-604 (for Fru-6P isomerization activity) is an active-site residue.

In terms of assembly, homodimer.

The protein localises to the cytoplasm. The catalysed reaction is D-fructose 6-phosphate + L-glutamine = D-glucosamine 6-phosphate + L-glutamate. Catalyzes the first step in hexosamine metabolism, converting fructose-6P into glucosamine-6P using glutamine as a nitrogen source. The sequence is that of Glutamine--fructose-6-phosphate aminotransferase [isomerizing] from Chlamydia abortus (strain DSM 27085 / S26/3) (Chlamydophila abortus).